The sequence spans 438 residues: MESLYQQFSHVLNTYYQPQTKVVVAFSGGVDSRLLLELLRRYREENSLSCHAVYVHHGLSENADIWADKCQVWAKQAGISCSVERVNLDTNSGESIELLAREARYEALARHINRGDLLLTGQHADDQVETFLLALKRGSGPKGLSSMAESMPFAGGTLVRPLLNTKREQIEATAKNIGLEWVEDESNQDTRYDRNFLRHRIVPELSERWPSIHQAVQRSASLCAQQEALLDELLGSVFARALQADLSLSIDELAIHSELAQARLIRMWLSKLNANMPSQTQLRLIWQEVALAQQDANPKLKLKQGEIRRFQNKLYWVTHRADVTSWQGHIQIDEPLILPESLGTLTLSSGSHQPNISLPSHPELLRVTFNPEGLSAHPTTRSRSRKLKKLFQEYNVPSWLRRQIPILMYKDQVVAVADLFVDQTFSGQDCELIWRKPL.

27–32 lines the ATP pocket; sequence SGGVDS.

The protein belongs to the tRNA(Ile)-lysidine synthase family.

It is found in the cytoplasm. The catalysed reaction is cytidine(34) in tRNA(Ile2) + L-lysine + ATP = lysidine(34) in tRNA(Ile2) + AMP + diphosphate + H(+). Functionally, ligates lysine onto the cytidine present at position 34 of the AUA codon-specific tRNA(Ile) that contains the anticodon CAU, in an ATP-dependent manner. Cytidine is converted to lysidine, thus changing the amino acid specificity of the tRNA from methionine to isoleucine. The polypeptide is tRNA(Ile)-lysidine synthase (Vibrio parahaemolyticus serotype O3:K6 (strain RIMD 2210633)).